The sequence spans 129 residues: NADPH-dependent 7-cyano-7-deazaguanine reductase (129 aa).

The active-site Thioimide intermediate is C34. D41 serves as the catalytic Proton donor. Residues 56–58 (VEL) and 75–76 (HE) contribute to the substrate site.

Belongs to the GTP cyclohydrolase I family. QueF type 1 subfamily.

It is found in the cytoplasm. The catalysed reaction is 7-aminomethyl-7-carbaguanine + 2 NADP(+) = 7-cyano-7-deazaguanine + 2 NADPH + 3 H(+). The protein operates within tRNA modification; tRNA-queuosine biosynthesis. Catalyzes the NADPH-dependent reduction of 7-cyano-7-deazaguanine (preQ0) to 7-aminomethyl-7-deazaguanine (preQ1). This chain is NADPH-dependent 7-cyano-7-deazaguanine reductase, found in Nitrosococcus oceani (strain ATCC 19707 / BCRC 17464 / JCM 30415 / NCIMB 11848 / C-107).